Reading from the N-terminus, the 740-residue chain is Catalase-peroxidase (740 aa).

The tract at residues 1–32 (MPEDRPIEDSPPIGEAQTDAPAGGCPAGFGRI) is disordered. A cross-link (tryptophyl-tyrosyl-methioninium (Trp-Tyr) (with M-263)) is located at residues 113–237 (WHAAGTYRVS…LAAVQMGLIY (125 aa)). H114 (proton acceptor) is an active-site residue. Positions 237 to 263 (YVNPEGPNGNPDPQASAIDIRETFGRM) form a cross-link, tryptophyl-tyrosyl-methioninium (Tyr-Met) (with W-113). H278 is a binding site for heme b.

The protein belongs to the peroxidase family. Peroxidase/catalase subfamily. Homodimer or homotetramer. Heme b serves as cofactor. Formation of the three residue Trp-Tyr-Met cross-link is important for the catalase, but not the peroxidase activity of the enzyme.

It catalyses the reaction H2O2 + AH2 = A + 2 H2O. The catalysed reaction is 2 H2O2 = O2 + 2 H2O. Bifunctional enzyme with both catalase and broad-spectrum peroxidase activity. May play a role in the intracellular survival of mycobacteria. This is Catalase-peroxidase from Mycolicibacterium smegmatis (Mycobacterium smegmatis).